We begin with the raw amino-acid sequence, 338 residues long: Large ribosomal subunit protein uL3 (338 aa).

4 disordered regions span residues 1-44 (MPQP…GFAG), 151-170 (AVPSVPKKKPDVMETRVGGG), 206-259 (VTKG…GQTG), and 312-338 (FRPAVRPNDQPRLDPEVRYVSNESNQG). Residues 22-31 (SETPRFNSWP) show a composition bias toward polar residues. Residues 220–237 (GVQKRKGKHARQGWRRRI) show a composition bias toward basic residues. Polar residues predominate over residues 247 to 259 (RVRSTVPQQGQTG).

This sequence belongs to the universal ribosomal protein uL3 family. In terms of assembly, part of the 50S ribosomal subunit. Forms a cluster with proteins L14 and L24e. Interacts weakly with protein L13.

In terms of biological role, one of the primary rRNA binding proteins, it binds directly near the 3'-end of the 23S rRNA, where it nucleates assembly of the 50S subunit. The sequence is that of Large ribosomal subunit protein uL3 (rpl3) from Haloarcula marismortui (strain ATCC 43049 / DSM 3752 / JCM 8966 / VKM B-1809) (Halobacterium marismortui).